The following is an 81-amino-acid chain: Acyl carrier protein (81 aa).

The Carrier domain maps to 2-80; sequence SKVDNIEQKV…DVVNYIKEHK (79 aa). Residue Ser40 is modified to O-(pantetheine 4'-phosphoryl)serine.

The protein belongs to the acyl carrier protein (ACP) family. In terms of processing, 4'-phosphopantetheine is transferred from CoA to a specific serine of apo-ACP by AcpS. This modification is essential for activity because fatty acids are bound in thioester linkage to the sulfhydryl of the prosthetic group.

The protein localises to the cytoplasm. It participates in lipid metabolism; fatty acid biosynthesis. Functionally, carrier of the growing fatty acid chain in fatty acid biosynthesis. The sequence is that of Acyl carrier protein from Rickettsia bellii (strain OSU 85-389).